The primary structure comprises 84 residues: Beta-mammal toxin Cn2 (84 aa).

An N-terminal signal peptide occupies residues 1–16; it reads LLIITACLALIGTVWA. The LCN-type CS-alpha/beta domain maps to 17–82; sequence KEGYLVDKNT…VWPLPNKRCS (66 aa). 4 cysteine pairs are disulfide-bonded: C28–C81, C32–C57, C41–C62, and C45–C64. Serine amide is present on S82.

Belongs to the long (4 C-C) scorpion toxin superfamily. Sodium channel inhibitor family. Beta subfamily. As to expression, expressed by the venom gland.

The protein resides in the secreted. Mammal beta-toxins bind voltage-independently at site-4 of sodium channels (Nav) and shift the activation voltage to more negative potentials. This toxin is active against mammals. The polypeptide is Beta-mammal toxin Cn2 (Centruroides noxius (Mexican scorpion)).